We begin with the raw amino-acid sequence, 276 residues long: Type II pantothenate kinase (276 aa).

8 to 15 (DAGGTLTK) provides a ligand contact to ATP. The active-site Proton acceptor is the Glu-76. Residues Thr-105, 127 to 131 (GGTIM), Phe-143, and Ser-230 contribute to the ATP site.

Belongs to the type II pantothenate kinase family. As to quaternary structure, homodimer.

The protein resides in the cytoplasm. It catalyses the reaction (R)-pantothenate + ATP = (R)-4'-phosphopantothenate + ADP + H(+). The protein operates within cofactor biosynthesis; coenzyme A biosynthesis; CoA from (R)-pantothenate: step 1/5. Its function is as follows. Catalyzes the phosphorylation of pantothenate (Pan), the first step in CoA biosynthesis. The sequence is that of Type II pantothenate kinase from Bacillus cereus (strain ATCC 10987 / NRS 248).